A 178-amino-acid polypeptide reads, in one-letter code: Cytochrome b6-f complex iron-sulfur subunit (178 aa).

Residues 20 to 42 (LLTFGTATGVALGALYPVANYFM) form a helical membrane-spanning segment. The Rieske domain occupies 65–161 (KTGWLATHQA…VDIEDDAVLV (97 aa)). Positions 107, 109, 125, and 128 each coordinate [2Fe-2S] cluster. A disulfide bridge connects residues Cys-112 and Cys-127.

Belongs to the Rieske iron-sulfur protein family. The 4 large subunits of the cytochrome b6-f complex are cytochrome b6, subunit IV (17 kDa polypeptide, PetD), cytochrome f and the Rieske protein, while the 4 small subunits are PetG, PetL, PetM and PetN. The complex functions as a dimer. Requires [2Fe-2S] cluster as cofactor.

Its subcellular location is the cellular thylakoid membrane. The catalysed reaction is 2 oxidized [plastocyanin] + a plastoquinol + 2 H(+)(in) = 2 reduced [plastocyanin] + a plastoquinone + 4 H(+)(out). Its function is as follows. Component of the cytochrome b6-f complex, which mediates electron transfer between photosystem II (PSII) and photosystem I (PSI), cyclic electron flow around PSI, and state transitions. The protein is Cytochrome b6-f complex iron-sulfur subunit of Prochlorococcus marinus (strain MIT 9312).